Here is a 76-residue protein sequence, read N- to C-terminus: Small VCP/p97-interacting protein (76 aa).

The interval 1–76 (MGLCFPCPAE…PAGGLRWTVS (76 aa)) is disordered. A lipid anchor (N-myristoyl glycine) is attached at glycine 2. 2 S-palmitoyl cysteine lipidation sites follow: cysteine 4 and cysteine 7. Over residues 18–37 (PEEKRAKLAEAAERRQKEAA) the composition is skewed to basic and acidic residues. The VCP/p97-interacting motif (VIM) stretch occupies residues 21-33 (KRAKLAEAAERRQ). Serine 46 carries the phosphoserine modification.

It belongs to the SVIP family. Interacts with VCP. Forms a complex with VCP/p97 and DERL1. Ubiquitous. In the adrenal gland, it is expressed in the cortex at all developmental stages.

The protein resides in the membrane. It is found in the smooth endoplasmic reticulum membrane. Its subcellular location is the golgi apparatus membrane. The protein localises to the cell membrane. It localises to the lysosome membrane. Negative regulator of the ER-associated degradation pathway (ERAD) of misfolded proteins. It competes with AMFR/gp78 for binding VCP/p97, and inhibits AMFR/gp78-VCP/p97 complex formation that is required for degradation of ERAD substrates. Involved in the regulation of adrenal cortisol and dehydroepiandrosterone (DHEA) biosynthesis. The chain is Small VCP/p97-interacting protein (Svip) from Rattus norvegicus (Rat).